Here is a 316-residue protein sequence, read N- to C-terminus: Lipoyl synthase (316 aa).

[4Fe-4S] cluster-binding residues include Cys-60, Cys-65, Cys-71, Cys-86, Cys-90, Cys-93, and Ser-297. The region spanning 72–286 (WEDREATFLI…KDEADEVGFT (215 aa)) is the Radical SAM core domain.

Belongs to the radical SAM superfamily. Lipoyl synthase family. Requires [4Fe-4S] cluster as cofactor.

It is found in the cytoplasm. It carries out the reaction [[Fe-S] cluster scaffold protein carrying a second [4Fe-4S](2+) cluster] + N(6)-octanoyl-L-lysyl-[protein] + 2 oxidized [2Fe-2S]-[ferredoxin] + 2 S-adenosyl-L-methionine + 4 H(+) = [[Fe-S] cluster scaffold protein] + N(6)-[(R)-dihydrolipoyl]-L-lysyl-[protein] + 4 Fe(3+) + 2 hydrogen sulfide + 2 5'-deoxyadenosine + 2 L-methionine + 2 reduced [2Fe-2S]-[ferredoxin]. It functions in the pathway protein modification; protein lipoylation via endogenous pathway; protein N(6)-(lipoyl)lysine from octanoyl-[acyl-carrier-protein]: step 2/2. In terms of biological role, catalyzes the radical-mediated insertion of two sulfur atoms into the C-6 and C-8 positions of the octanoyl moiety bound to the lipoyl domains of lipoate-dependent enzymes, thereby converting the octanoylated domains into lipoylated derivatives. The chain is Lipoyl synthase from Nocardioides sp. (strain ATCC BAA-499 / JS614).